Consider the following 522-residue polypeptide: Glutamate--cysteine ligase, chloroplastic (522 aa).

Disulfide bonds link cysteine 186/cysteine 406 and cysteine 349/cysteine 364.

This sequence belongs to the carboxylate-amine ligase family. Glutamate--cysteine ligase type 2 subfamily. Homodimer or monomer when oxidized or reduced, respectively. Post-translationally, the Cys-186-Cys-406 disulfide bridge is known to modulate the enzyme activity according to the redox status. The oxidized form constitutes the active enzyme. Abundant in leaves and roots. Expressed to a high level in leaf trichomes of mature plant.

Its subcellular location is the plastid. It is found in the chloroplast. The catalysed reaction is L-cysteine + L-glutamate + ATP = gamma-L-glutamyl-L-cysteine + ADP + phosphate + H(+). It participates in sulfur metabolism; glutathione biosynthesis; glutathione from L-cysteine and L-glutamate: step 1/2. With respect to regulation, feedback inhibition by glutathione. Inhibited by buthionine sulfoximine and cystamine. In terms of biological role, seems to play an important role in controlling the expression of resistance responses like the regulation of salicylic acid (SA) and phytoalexin (camalexin) production. Involved in resistance to fungal and bacterial pathogens. Required for the regulation of cell proliferation in root apical meristems through the GSH-dependent developmental pathway. Also participates in the detoxification process, the antioxidant response and is essential for embryo development and proper seed maturation. The protein is Glutamate--cysteine ligase, chloroplastic (GSH1) of Arabidopsis thaliana (Mouse-ear cress).